The sequence spans 723 residues: DNA-binding protein RFX2 (723 aa).

Residues 1–46 (MQNSEGGADSPASVALRPSAAAPPVPASPQRVLVQAASSAPKGAQM) form a disordered region. A compositionally biased stretch (low complexity) spans 10–20 (SPASVALRPSA). At Ser28 the chain carries Phosphoserine. Residues 199 to 274 (HLQWLLDNYE…YHYYGIRLKP (76 aa)) constitute a DNA-binding region (RFX-type winged-helix). The tract at residues 292–332 (QQPMHQKPRYRPAQKTDSLGDSGSHSSLHSTPEQTMAAQSQ) is disordered. Low complexity predominate over residues 307–322 (TDSLGDSGSHSSLHST). The span at 323 to 332 (PEQTMAAQSQ) shows a compositional bias: polar residues. Ser416 carries the post-translational modification Phosphoserine. A disordered region spans residues 689–723 (GDERRGSEAGPDAHSLGEPLVKRERSDPNHSLQGI).

Belongs to the RFX family. Homodimer; probably only forms homodimers in testis. Heterodimer; heterodimerizes with RFX1 and RFX3.

It localises to the nucleus. The protein localises to the cytoplasm. In terms of biological role, transcription factor that acts as a key regulator of spermatogenesis. Acts by regulating expression of genes required for the haploid phase during spermiogenesis, such as genes required for cilium assembly and function. Recognizes and binds the X-box, a regulatory motif with DNA sequence 5'-GTNRCC(0-3N)RGYAAC-3' present on promoters. Probably activates transcription of the testis-specific histone gene H1-6. In Macaca fascicularis (Crab-eating macaque), this protein is DNA-binding protein RFX2 (RFX2).